A 170-amino-acid chain; its full sequence is Peptide deformylase (170 aa).

Fe cation is bound by residues C91 and H133. E134 is an active-site residue. H137 lines the Fe cation pocket.

The protein belongs to the polypeptide deformylase family. Fe(2+) serves as cofactor.

It catalyses the reaction N-terminal N-formyl-L-methionyl-[peptide] + H2O = N-terminal L-methionyl-[peptide] + formate. In terms of biological role, removes the formyl group from the N-terminal Met of newly synthesized proteins. Requires at least a dipeptide for an efficient rate of reaction. N-terminal L-methionine is a prerequisite for activity but the enzyme has broad specificity at other positions. In Yersinia pseudotuberculosis serotype O:1b (strain IP 31758), this protein is Peptide deformylase.